The chain runs to 194 residues: 7-methyl-GTP pyrophosphatase (194 aa).

Asp-69 acts as the Proton acceptor in catalysis.

Belongs to the Maf family. YceF subfamily. A divalent metal cation is required as a cofactor.

The protein resides in the cytoplasm. The catalysed reaction is N(7)-methyl-GTP + H2O = N(7)-methyl-GMP + diphosphate + H(+). Nucleoside triphosphate pyrophosphatase that hydrolyzes 7-methyl-GTP (m(7)GTP). May have a dual role in cell division arrest and in preventing the incorporation of modified nucleotides into cellular nucleic acids. The sequence is that of 7-methyl-GTP pyrophosphatase from Sodalis glossinidius (strain morsitans).